Consider the following 322-residue polypeptide: Ferrochelatase (322 aa).

Fe cation is bound by residues His-194 and Glu-275.

It belongs to the ferrochelatase family.

The protein resides in the cytoplasm. The catalysed reaction is heme b + 2 H(+) = protoporphyrin IX + Fe(2+). It participates in porphyrin-containing compound metabolism; protoheme biosynthesis; protoheme from protoporphyrin-IX: step 1/1. In terms of biological role, catalyzes the ferrous insertion into protoporphyrin IX. The chain is Ferrochelatase from Proteus mirabilis (strain HI4320).